The sequence spans 247 residues: tRNA uridine(34) hydroxylase (247 aa).

The Rhodanese domain maps to 124–218; the sequence is TKQDVIVIDT…YLEDTQNKNN (95 aa). The active-site Cysteine persulfide intermediate is cysteine 178.

Belongs to the TrhO family.

The catalysed reaction is uridine(34) in tRNA + AH2 + O2 = 5-hydroxyuridine(34) in tRNA + A + H2O. In terms of biological role, catalyzes oxygen-dependent 5-hydroxyuridine (ho5U) modification at position 34 in tRNAs. The polypeptide is tRNA uridine(34) hydroxylase (Rickettsia rickettsii (strain Iowa)).